The following is a 360-amino-acid chain: Phosphoserine aminotransferase (360 aa).

R41 provides a ligand contact to L-glutamate. Pyridoxal 5'-phosphate is bound by residues W101, T152, D172, and Q195. K196 is modified (N6-(pyridoxal phosphate)lysine). 237 to 238 provides a ligand contact to pyridoxal 5'-phosphate; sequence NT.

The protein belongs to the class-V pyridoxal-phosphate-dependent aminotransferase family. SerC subfamily. In terms of assembly, homodimer. Pyridoxal 5'-phosphate serves as cofactor.

The protein localises to the cytoplasm. The catalysed reaction is O-phospho-L-serine + 2-oxoglutarate = 3-phosphooxypyruvate + L-glutamate. It carries out the reaction 4-(phosphooxy)-L-threonine + 2-oxoglutarate = (R)-3-hydroxy-2-oxo-4-phosphooxybutanoate + L-glutamate. It participates in amino-acid biosynthesis; L-serine biosynthesis; L-serine from 3-phospho-D-glycerate: step 2/3. It functions in the pathway cofactor biosynthesis; pyridoxine 5'-phosphate biosynthesis; pyridoxine 5'-phosphate from D-erythrose 4-phosphate: step 3/5. Its function is as follows. Catalyzes the reversible conversion of 3-phosphohydroxypyruvate to phosphoserine and of 3-hydroxy-2-oxo-4-phosphonooxybutanoate to phosphohydroxythreonine. This Burkholderia ambifaria (strain ATCC BAA-244 / DSM 16087 / CCUG 44356 / LMG 19182 / AMMD) (Burkholderia cepacia (strain AMMD)) protein is Phosphoserine aminotransferase.